The chain runs to 62 residues: MAVPKRKTSPSRRGMRRSADALKAPTYVEDKDSGELRRPHHIDLKTGMYRGRQVLKVKSAEA.

Residues 1–16 (MAVPKRKTSPSRRGMR) are compositionally biased toward basic residues. The disordered stretch occupies residues 1-44 (MAVPKRKTSPSRRGMRRSADALKAPTYVEDKDSGELRRPHHIDL). Residues 28–44 (VEDKDSGELRRPHHIDL) show a composition bias toward basic and acidic residues.

This sequence belongs to the bacterial ribosomal protein bL32 family.

The protein is Large ribosomal subunit protein bL32 of Methylorubrum extorquens (strain CM4 / NCIMB 13688) (Methylobacterium extorquens).